A 506-amino-acid chain; its full sequence is Zinc finger and SCAN domain containing protein 4F (506 aa).

Residues 1–24 (MASQQAPAKDLQTNNLEFTPTDSS) are disordered. An SCAN box domain is found at 37–119 (SAQLNFSPSN…RFMESLTDEC (83 aa)). C2H2-type zinc fingers lie at residues 395-417 (YKCE…QRTH), 424-446 (LLCV…EIIH), 452-474 (FKCS…EMIH), and 480-503 (YVCS…RNYH).

In terms of tissue distribution, up-regulated in blastocyst outgrowths and is detectable in a mosaic fashion in ES cultures.

It is found in the nucleus. It localises to the chromosome. The protein resides in the telomere. In terms of biological role, transcription factor required to regulate early development. Binds telomeres and plays a key role in genomic stability by regulating telomere elongation. Acts as an activator of spontaneous telomere sister chromatid exchange (T-SCE) and telomere elongation. The chain is Zinc finger and SCAN domain containing protein 4F (Zscan4f) from Mus musculus (Mouse).